A 308-amino-acid polypeptide reads, in one-letter code: MSTWTGKRVAVLYGGRSSEREVSLRTGAACAEALRQKGHDVVLVDVDLEVAARLRAERVEVAFVALHGRWGEDGSIQGLLESMAIPYTGSGVLASAMGMDKTVSKAIFRSLGLAVADYRVFPRAAAGAIGVDDLPFGLPCVVKPAGEGSSVGVHLVNAAAELGPACRDAAGYAGDVIVERYVKGTEVDVAVLEGKALGAIEIVPANAFYDYAAKYTAGTTKYFYPARIPEAHVRAVMEAAEAAHRGIGCSGVTRVDFIVAADGTPYILEVNTLPGMTATSLVPKIAAGLGLSFPDLCDRILDGAALKA.

The region spanning 105–302 (KAIFRSLGLA…FPDLCDRILD (198 aa)) is the ATP-grasp domain. ATP is bound at residue 133–188 (DLPFGLPCVVKPAGEGSSVGVHLVNAAAELGPACRDAAGYAGDVIVERYVKGTEVD). Mg(2+) is bound by residues Asp256, Glu269, and Asn271.

The protein belongs to the D-alanine--D-alanine ligase family. It depends on Mg(2+) as a cofactor. Mn(2+) serves as cofactor.

Its subcellular location is the cytoplasm. It catalyses the reaction 2 D-alanine + ATP = D-alanyl-D-alanine + ADP + phosphate + H(+). It participates in cell wall biogenesis; peptidoglycan biosynthesis. Cell wall formation. The chain is D-alanine--D-alanine ligase from Anaeromyxobacter dehalogenans (strain 2CP-C).